Reading from the N-terminus, the 309-residue chain is Sulfate adenylyltransferase subunit 2 (309 aa).

This sequence belongs to the PAPS reductase family. CysD subfamily. Heterodimer composed of CysD, the smaller subunit, and CysN.

The enzyme catalyses sulfate + ATP + H(+) = adenosine 5'-phosphosulfate + diphosphate. It participates in sulfur metabolism; hydrogen sulfide biosynthesis; sulfite from sulfate: step 1/3. Its function is as follows. With CysN forms the ATP sulfurylase (ATPS) that catalyzes the adenylation of sulfate producing adenosine 5'-phosphosulfate (APS) and diphosphate, the first enzymatic step in sulfur assimilation pathway. APS synthesis involves the formation of a high-energy phosphoric-sulfuric acid anhydride bond driven by GTP hydrolysis by CysN coupled to ATP hydrolysis by CysD. This Mycobacterium sp. (strain JLS) protein is Sulfate adenylyltransferase subunit 2.